A 688-amino-acid polypeptide reads, in one-letter code: MAHLLGSPACMDSLRKDLTDLQGAIVDVFSRAGPVRFPSWKFPDRAACDLDMVALLEHYDHVPGDPEFTQLAHAVLLELVIDRLLLLLQSCASYLENLTLEQIVPPARAAGPCMSVGLTVRRFWNSLLRLGMLSQQAALQKRANQGETLTSKPTAKGEPAGSRELGTAQLVKPPSPVPGLPQACPERDSLPVSVSLRRPGGTAENTRSVHSQTIETALVPCDACTSVQSSLREVGKVVINLCQSQNLPSSLGRFQQLVRDSMGHRPLPAATVGLWAAEQSKDLACLGKLVGLLRAQLEEAEGQKDRLRMQVGELEQALQEEQAARQRQAQEAEQHRAQWERERQQLLAETSDLKTKVATLEGELKQQRESTQAVESKAQQLQAEAEHRLEAERQVQHLEQQVELLAGRLDGASQQIRWASTELDKEKARVDSMVRHQESLQAKQRALLQQLDSLDQEREELRGSLDEAEAQRAHVEEQLQSVQGEREQATTDLRLTISELERELVELRERERLLVAFPDLHRPAEAQIQSSGNVTDDMERQVQANDIRIRVLQEENGRLRSMLSKIREVAQQGGLKLIPEDQLWALRSKGIQGAEPPLQTARTSPGAPGRRHLPGSRPASAGRTLPGQPQASPPLRPHRRPGESSPEDATYLTNCAQSPIRALARLRRRLSPSSGRASPAHQPQERPT.

Residues 143–153 (ANQGETLTSKP) show a composition bias toward polar residues. Disordered regions lie at residues 143-162 (ANQG…PAGS), 168-189 (AQLV…ERDS), 322-341 (QAAR…QWER), 366-385 (QQRE…QAEA), and 592-688 (QGAE…ERPT). A coiled-coil region spans residues 288 to 572 (KLVGLLRAQL…LSKIREVAQQ (285 aa)). The segment covering 369–382 (ESTQAVESKAQQLQ) has biased composition (polar residues). The segment covering 671-680 (SPSSGRASPA) has biased composition (low complexity).

The chain is Coiled-coil domain-containing protein 157 (CCDC157) from Bos taurus (Bovine).